A 1680-amino-acid polypeptide reads, in one-letter code: RAF-like serine/threonine-protein kinase PRAF (1680 aa).

Residues Phe-86 to Pro-163 are disordered. The PB1 domain occupies Arg-166 to Ala-267. Disordered stretches follow at residues Leu-363–Ala-388, Pro-417–Gln-516, Pro-556–Gln-580, Gly-594–Phe-613, Gln-641–Gln-672, Arg-700–Gln-725, and Leu-1186–Gln-1226. Positions Asn-366–Ala-388 are enriched in low complexity. The segment covering His-446–Arg-482 has biased composition (basic and acidic residues). Low complexity-rich tracts occupy residues Gln-560–Gln-580 and Gln-603–Phe-613. Positions Gln-641 to Ser-651 are enriched in polar residues. Low complexity predominate over residues Ser-1204–Ser-1217. Phosphoserine is present on Ser-1248. Basic and acidic residues predominate over residues Ala-1339–Leu-1354. The disordered stretch occupies residues Ala-1339–Pro-1372. Position 1365 is a phosphoserine (Ser-1365). Residues Leu-1389–Met-1655 form the Protein kinase domain. Residues Leu-1395 to Val-1403 and Lys-1416 contribute to the ATP site. The Proton acceptor role is filled by Asp-1518. The disordered stretch occupies residues Pro-1661–Val-1680.

Belongs to the protein kinase superfamily. Ser/Thr protein kinase family. Hyperphosphorylated in response to auxin. Its phosphorylation state is also rapidly stimulated by photosynthetic activity (e.g. in response to blue light and red light irradiation); dephosphorylated in the darkness.

The protein resides in the cytoplasm. It carries out the reaction L-seryl-[protein] + ATP = O-phospho-L-seryl-[protein] + ADP + H(+). The catalysed reaction is L-threonyl-[protein] + ATP = O-phospho-L-threonyl-[protein] + ADP + H(+). Activated by auxin via rapid phosphorylation. Regulated by photosynthesis-activity-dependent changes in its phosphorylation status. Its function is as follows. RAF-like protein kinase acting as a central mediator of a fast response pathway to auxin involving proteins phosphorylation, and leading to rapid cellular responses including membrane depolarization and cytoplasmic streaming. Required for general growth and developmental process. Photosynthesis signaling kinase involved in the regulation of the sucrose metabolism involving PGM1. Necessary for optimal chloroplast electron transport rate (ETR). The polypeptide is RAF-like serine/threonine-protein kinase PRAF (Marchantia polymorpha (Common liverwort)).